The following is a 303-amino-acid chain: D-alanine--D-alanine ligase (303 aa).

The region spanning 103–293 is the ATP-grasp domain; sequence KTLFIKGGIP…FAQLCEKILE (191 aa). 130 to 179 is an ATP binding site; the sequence is PYVIKPSRQGSSIGIEFVYDIKELDQAIKKSTQYDHVVLAEALITGKELT. Residues aspartate 247, glutamate 260, and asparagine 262 each coordinate Mg(2+).

This sequence belongs to the D-alanine--D-alanine ligase family. Mg(2+) is required as a cofactor. The cofactor is Mn(2+).

The protein localises to the cytoplasm. It catalyses the reaction 2 D-alanine + ATP = D-alanyl-D-alanine + ADP + phosphate + H(+). The protein operates within cell wall biogenesis; peptidoglycan biosynthesis. Cell wall formation. The sequence is that of D-alanine--D-alanine ligase from Methylacidiphilum infernorum (isolate V4) (Methylokorus infernorum (strain V4)).